Here is a 113-residue protein sequence, read N- to C-terminus: Ig heavy chain V-III region E109 (113 aa).

Residues 1–113 (EVKLEESGGG…YWGQGTLVTV (113 aa)) enclose the Ig-like domain. Cys-22 and Cys-98 are disulfide-bonded.

This Mus musculus (Mouse) protein is Ig heavy chain V-III region E109.